A 51-amino-acid chain; its full sequence is UPF0320 protein YOL166W-A (51 aa).

This sequence belongs to the UPF0320 family.

The protein is UPF0320 protein YOL166W-A of Saccharomyces cerevisiae (strain ATCC 204508 / S288c) (Baker's yeast).